The following is a 72-amino-acid chain: Translation initiation factor IF-1 (72 aa).

The 72-residue stretch at 1–72 folds into the S1-like domain; it reads MAKEEVLEFP…TKGRITYRFK (72 aa).

Belongs to the IF-1 family. In terms of assembly, component of the 30S ribosomal translation pre-initiation complex which assembles on the 30S ribosome in the order IF-2 and IF-3, IF-1 and N-formylmethionyl-tRNA(fMet); mRNA recruitment can occur at any time during PIC assembly.

It is found in the cytoplasm. In terms of biological role, one of the essential components for the initiation of protein synthesis. Stabilizes the binding of IF-2 and IF-3 on the 30S subunit to which N-formylmethionyl-tRNA(fMet) subsequently binds. Helps modulate mRNA selection, yielding the 30S pre-initiation complex (PIC). Upon addition of the 50S ribosomal subunit IF-1, IF-2 and IF-3 are released leaving the mature 70S translation initiation complex. The chain is Translation initiation factor IF-1 from Brucella abortus (strain 2308).